Reading from the N-terminus, the 290-residue chain is 4-hydroxy-tetrahydrodipicolinate synthase (290 aa).

T45 contacts pyruvate. Residue Y133 is the Proton donor/acceptor of the active site. K161 functions as the Schiff-base intermediate with substrate in the catalytic mechanism. I203 lines the pyruvate pocket.

It belongs to the DapA family. As to quaternary structure, homotetramer; dimer of dimers.

Its subcellular location is the cytoplasm. It carries out the reaction L-aspartate 4-semialdehyde + pyruvate = (2S,4S)-4-hydroxy-2,3,4,5-tetrahydrodipicolinate + H2O + H(+). It functions in the pathway amino-acid biosynthesis; L-lysine biosynthesis via DAP pathway; (S)-tetrahydrodipicolinate from L-aspartate: step 3/4. Catalyzes the condensation of (S)-aspartate-beta-semialdehyde [(S)-ASA] and pyruvate to 4-hydroxy-tetrahydrodipicolinate (HTPA). The chain is 4-hydroxy-tetrahydrodipicolinate synthase from Cellvibrio japonicus (strain Ueda107) (Pseudomonas fluorescens subsp. cellulosa).